Consider the following 1892-residue polypeptide: Alpha-2-macroglobulin (1892 aa).

The first 23 residues, 1-23 (MKNIFRKFVFTIFVCLINLQLIA), serve as a signal peptide directing secretion. Positions 1441 to 1444 (CTEQ) form a cross-link, isoglutamyl cysteine thioester (Cys-Gln).

The protein belongs to the protease inhibitor I39 (alpha-2-macroglobulin) family. Bacterial alpha-2-macroglobulin subfamily.

Protects the bacterial cell from host peptidases. The protein is Alpha-2-macroglobulin of Rickettsia conorii (strain ATCC VR-613 / Malish 7).